Consider the following 124-residue polypeptide: Small ribosomal subunit protein uS12 (124 aa).

A 3-methylthioaspartic acid modification is found at aspartate 89.

This sequence belongs to the universal ribosomal protein uS12 family. As to quaternary structure, part of the 30S ribosomal subunit. Contacts proteins S8 and S17. May interact with IF1 in the 30S initiation complex.

In terms of biological role, with S4 and S5 plays an important role in translational accuracy. Functionally, interacts with and stabilizes bases of the 16S rRNA that are involved in tRNA selection in the A site and with the mRNA backbone. Located at the interface of the 30S and 50S subunits, it traverses the body of the 30S subunit contacting proteins on the other side and probably holding the rRNA structure together. The combined cluster of proteins S8, S12 and S17 appears to hold together the shoulder and platform of the 30S subunit. This is Small ribosomal subunit protein uS12 from Histophilus somni (strain 129Pt) (Haemophilus somnus).